The primary structure comprises 100 residues: MVPLWWSILLGVALFVIGAGGVLLRRNILIVLMSLELLLNSVNINFIAFGQYYDDFRGQIFAIFVIAITAAEVAVALGILVALVRNKSTLKVDDVTIMKG.

A run of 3 helical transmembrane segments spans residues 4–24 (LWWS…GVLL), 28–48 (ILIV…NFIA), and 60–80 (IFAI…LGIL).

The protein belongs to the complex I subunit 4L family. In terms of assembly, NDH-1 is composed of 14 different subunits. Subunits NuoA, H, J, K, L, M, N constitute the membrane sector of the complex.

Its subcellular location is the cell inner membrane. The catalysed reaction is a quinone + NADH + 5 H(+)(in) = a quinol + NAD(+) + 4 H(+)(out). Its function is as follows. NDH-1 shuttles electrons from NADH, via FMN and iron-sulfur (Fe-S) centers, to quinones in the respiratory chain. The immediate electron acceptor for the enzyme in this species is believed to be ubiquinone. Couples the redox reaction to proton translocation (for every two electrons transferred, four hydrogen ions are translocated across the cytoplasmic membrane), and thus conserves the redox energy in a proton gradient. The polypeptide is NADH-quinone oxidoreductase subunit K 2 (Rhizobium meliloti (strain 1021) (Ensifer meliloti)).